Consider the following 311-residue polypeptide: HPr kinase/phosphorylase (311 aa).

Active-site residues include histidine 138 and lysine 159. 153–160 is an ATP binding site; sequence GSSGIGKS. Residue serine 160 participates in Mg(2+) binding. The Proton acceptor; for phosphorylation activity. Proton donor; for dephosphorylation activity role is filled by aspartate 177. The important for the catalytic mechanism of both phosphorylation and dephosphorylation stretch occupies residues 201–210; the sequence is LEIRGVGIIN. Residue glutamate 202 coordinates Mg(2+). Arginine 243 is a catalytic residue. An important for the catalytic mechanism of dephosphorylation region spans residues 264 to 269; sequence PVRPGR.

It belongs to the HPrK/P family. As to quaternary structure, homohexamer. Mg(2+) is required as a cofactor.

The enzyme catalyses [HPr protein]-L-serine + ATP = [HPr protein]-O-phospho-L-serine + ADP + H(+). The catalysed reaction is [HPr protein]-O-phospho-L-serine + phosphate + H(+) = [HPr protein]-L-serine + diphosphate. Functionally, catalyzes the ATP- as well as the pyrophosphate-dependent phosphorylation of a specific serine residue in HPr, a phosphocarrier protein of the phosphoenolpyruvate-dependent sugar phosphotransferase system (PTS). HprK/P also catalyzes the pyrophosphate-producing, inorganic phosphate-dependent dephosphorylation (phosphorolysis) of seryl-phosphorylated HPr (P-Ser-HPr). The two antagonistic activities of HprK/P are regulated by several intracellular metabolites, which change their concentration in response to the absence or presence of rapidly metabolisable carbon sources (glucose, fructose, etc.) in the growth medium. Therefore, by controlling the phosphorylation state of HPr, HPrK/P is a sensor enzyme that plays a major role in the regulation of carbon metabolism and sugar transport: it mediates carbon catabolite repression (CCR), and regulates PTS-catalyzed carbohydrate uptake and inducer exclusion. In Brevibacillus brevis (strain 47 / JCM 6285 / NBRC 100599), this protein is HPr kinase/phosphorylase.